The chain runs to 382 residues: Transcription factor MYB104 (382 aa).

2 HTH myb-type domains span residues 13-69 (KKTF…KPSL) and 70-120 (KKGP…MRLK). 2 DNA-binding regions (H-T-H motif) span residues 41–65 (WTHV…MNHL) and 93–116 (WSQM…NARR). A disordered region spans residues 326 to 364 (IPKTDTSSESQLFQSSLRSHTDATPDIANTTGYVGSNER). Composition is skewed to polar residues over residues 329 to 343 (TDTS…SSLR) and 352 to 364 (IANT…SNER).

It localises to the nucleus. The chain is Transcription factor MYB104 (MYB104) from Arabidopsis thaliana (Mouse-ear cress).